Reading from the N-terminus, the 440-residue chain is Adenylosuccinate synthetase (440 aa).

GTP-binding positions include 14-20 and 42-44; these read GDEGKGK and GHT. Catalysis depends on D15, which acts as the Proton acceptor. 2 residues coordinate Mg(2+): D15 and G42. Residues 15–18, 40–43, T131, R145, Q226, T241, and R313 each bind IMP; these read DEGK and NAGH. The active-site Proton donor is the H43. 309-315 is a binding site for substrate; it reads ATTGRQR. GTP-binding positions include R315, 341 to 343, and 423 to 425; these read KLD and STG.

Belongs to the adenylosuccinate synthetase family. In terms of assembly, homodimer. It depends on Mg(2+) as a cofactor.

It localises to the cytoplasm. The enzyme catalyses IMP + L-aspartate + GTP = N(6)-(1,2-dicarboxyethyl)-AMP + GDP + phosphate + 2 H(+). It functions in the pathway purine metabolism; AMP biosynthesis via de novo pathway; AMP from IMP: step 1/2. In terms of biological role, plays an important role in the de novo pathway of purine nucleotide biosynthesis. Catalyzes the first committed step in the biosynthesis of AMP from IMP. This Hydrogenovibrio crunogenus (strain DSM 25203 / XCL-2) (Thiomicrospira crunogena) protein is Adenylosuccinate synthetase.